The sequence spans 329 residues: SLAM family member 5 (329 aa).

Positions 1–21 (MAQRHLWIWFLCLQTWSEAAG) are cleaved as a signal peptide. At 22–221 (KDADPMVMNG…TPSFHPRHAV (200 aa)) the chain is on the extracellular side. The Ig-like V-type domain maps to 26-129 (PMVMNGILGE…IYYLHIYRRL (104 aa)). Residues 132–206 (PKITQSLISS…SNSSDSVTVQ (75 aa)) form the Ig-like C2-type domain. N147 carries N-linked (GlcNAc...) asparagine glycosylation. C152 and C190 form a disulfide bridge. Residues 222–242 (LPGGLAVLFLLILIPMLAFLF) traverse the membrane as a helical segment. Residues 243 to 329 (RLYKRRRDRI…PKALGNEIVV (87 aa)) are Cytoplasmic-facing. Residues 263–268 (TVYAVV) carry the ITSM 1 motif. Residue Y265 is modified to Phosphotyrosine. Y280 is subject to Phosphotyrosine; by LYN. The ITSM 2 signature appears at 298 to 303 (TIYSSV). Residue Y300 is modified to Phosphotyrosine.

In terms of assembly, homodimer; via its extracellular domain. Forms a head to tail dimer with a CD48 molecule from another cell. Interacts with SH2 domain-containing proteins SH2D1A/SAP and SH2D1B/EAT-2. Interacts with tyrosine-protein phosphatases PTPN6/SHP-1 and PTPN11/SHP-2 via its phosphorylated cytoplasmic domain, and this interaction is blocked by SH2D1A. In terms of processing, phosphorylated by tyrosine-protein kinase LCK on tyrosine residues following ligation induced by agonist monoclonal antibody. The association with SH2D1A/SAP is dependent of tyrosine phosphorylation of its cytoplasmic domain. Phosphorylated on Tyr-280 and Tyr-300 following platelet aggregation. Phosphorylated on tyrosine residues upon high affinity immunoglobulin epsilon receptor aggregation in mast cells. Post-translationally, N-glycosylated. As to expression, predominantly expressed in hematopoietic tissues such as lymph node, spleen, thymus, and bone marrow. Detected also in lung.

The protein resides in the cell membrane. In terms of biological role, self-ligand receptor of the signaling lymphocytic activation molecule (SLAM) family. SLAM receptors triggered by homo- or heterotypic cell-cell interactions are modulating the activation and differentiation of a wide variety of immune cells and thus are involved in the regulation and interconnection of both innate and adaptive immune response. Activities are controlled by presence or absence of small cytoplasmic adapter proteins, SH2D1A/SAP and/or SH2D1B/EAT-2. Can mediate natural killer (NK) cell cytotoxicity dependent on SH2D1A and SH2D1B. Increases proliferative responses of activated T-cells and SH2D1A/SAP does not seen be required for this process. Homophilic interactions enhance interferon gamma/IFNG secretion in lymphocytes and induce platelet stimulation via a SH2D1A/SAP-dependent pathway. May serve as a marker for hematopoietic progenitor cells. Required for a prolonged T-cell:B-cell contact, optimal T follicular helper function, and germinal center formation. In germinal centers involved in maintaining B cell tolerance and in preventing autoimmunity. In mast cells negatively regulates high affinity immunoglobulin epsilon receptor signaling; independent of SH2D1A and SH2D1B but implicating FES and PTPN6/SHP-1. In macrophages enhances LPS-induced MAPK phosphorylation and NF-kappaB activation and modulates LPS-induced cytokine secretion; involving ITSM 2. Positively regulates macroautophagy in primary dendritic cells via stabilization of IRF8; inhibits TRIM21-mediated proteasomal degradation of IRF8. The sequence is that of SLAM family member 5 (Cd84) from Mus musculus (Mouse).